A 101-amino-acid chain; its full sequence is Protein SPIRAL1-like 3 (101 aa).

The segment covering 1 to 22 has biased composition (gly residues); the sequence is MGRGVSSGGGQSSLGYLFGGGE. Disordered stretches follow at residues 1–54 and 73–101; these read MGRG…GIQS and TDRP…KDGK.

This sequence belongs to the SPIRAL1 family.

In terms of biological role, acts in maintaining the cortical microtubules organization essential for anisotropic cell growth. In Oryza sativa subsp. japonica (Rice), this protein is Protein SPIRAL1-like 3.